The following is a 257-amino-acid chain: BTB/POZ domain-containing protein KCTD1 (257 aa).

The interval 1 to 25 (MSRPLITRSPASPLNNQGIPTPAQL) is disordered. A phosphoserine mark is found at Ser9 and Ser12. Residues 9-25 (SPASPLNNQGIPTPAQL) show a composition bias toward polar residues. The BTB domain occupies 30 to 100 (APVHIDVGGH…LRTSKLLIPD (71 aa)).

Forms homopentamers. Interacts with KCTD15, probably forming heteropentamers depending on its abundance in a cell-type dependent manner. Interacts with TFAP2A, TFAP2B and TFAP2C via the BTB domain. Sumoylated.

The protein localises to the nucleus. Its function is as follows. May repress the transcriptional activity of AP-2 family members, including TFAP2A, TFAP2B and TFAP2C to various extent. The polypeptide is BTB/POZ domain-containing protein KCTD1 (Kctd1) (Rattus norvegicus (Rat)).